A 95-amino-acid polypeptide reads, in one-letter code: Nodulin (95 aa).

The chain is Nodulin from Striga hermonthica (Purple witchweed).